A 441-amino-acid chain; its full sequence is tRNA modification GTPase MnmE (441 aa).

The (6S)-5-formyl-5,6,7,8-tetrahydrofolate site is built by arginine 21, glutamate 78, and lysine 117. Residues 211–363 form the TrmE-type G domain; that stretch reads GIVMTIVGKP…LENKIVSKVK (153 aa). Asparagine 221 contacts K(+). Residues 221-226, 240-246, and 265-268 each bind GTP; these read NSGKST, TDIPGTT, and DTAG. Serine 225 contacts Mg(2+). Threonine 240, isoleucine 242, and threonine 245 together coordinate K(+). Threonine 246 contributes to the Mg(2+) binding site. Residue lysine 441 participates in (6S)-5-formyl-5,6,7,8-tetrahydrofolate binding.

It belongs to the TRAFAC class TrmE-Era-EngA-EngB-Septin-like GTPase superfamily. TrmE GTPase family. As to quaternary structure, homodimer. Heterotetramer of two MnmE and two MnmG subunits. It depends on K(+) as a cofactor.

It is found in the cytoplasm. In terms of biological role, exhibits a very high intrinsic GTPase hydrolysis rate. Involved in the addition of a carboxymethylaminomethyl (cmnm) group at the wobble position (U34) of certain tRNAs, forming tRNA-cmnm(5)s(2)U34. The protein is tRNA modification GTPase MnmE of Thermosipho melanesiensis (strain DSM 12029 / CIP 104789 / BI429).